Consider the following 148-residue polypeptide: SsrA-binding protein (148 aa).

The protein belongs to the SmpB family.

The protein localises to the cytoplasm. Functionally, required for rescue of stalled ribosomes mediated by trans-translation. Binds to transfer-messenger RNA (tmRNA), required for stable association of tmRNA with ribosomes. tmRNA and SmpB together mimic tRNA shape, replacing the anticodon stem-loop with SmpB. tmRNA is encoded by the ssrA gene; the 2 termini fold to resemble tRNA(Ala) and it encodes a 'tag peptide', a short internal open reading frame. During trans-translation Ala-aminoacylated tmRNA acts like a tRNA, entering the A-site of stalled ribosomes, displacing the stalled mRNA. The ribosome then switches to translate the ORF on the tmRNA; the nascent peptide is terminated with the 'tag peptide' encoded by the tmRNA and targeted for degradation. The ribosome is freed to recommence translation, which seems to be the essential function of trans-translation. In Pseudothermotoga lettingae (strain ATCC BAA-301 / DSM 14385 / NBRC 107922 / TMO) (Thermotoga lettingae), this protein is SsrA-binding protein.